Reading from the N-terminus, the 171-residue chain is MPLLDSFTVDHTRMSAPAVRVAKTMKTPSGDTITVFDLRFTVPNKKAMPEKGIHTLEHLFAGFMRNHLNGEGVEIIDISPMGCRTGFYMSLIGQPDEQRVANAWKAAMEDVLKVKDQNHIPELNVYQCGTYEMHSLAEAQDIARDILSHTIGINHNDELALPEDKLKELQI.

3 residues coordinate Fe cation: H54, H58, and C128.

It belongs to the LuxS family. Homodimer. Fe cation serves as cofactor.

The catalysed reaction is S-(5-deoxy-D-ribos-5-yl)-L-homocysteine = (S)-4,5-dihydroxypentane-2,3-dione + L-homocysteine. Functionally, involved in the synthesis of autoinducer 2 (AI-2) which is secreted by bacteria and is used to communicate both the cell density and the metabolic potential of the environment. The regulation of gene expression in response to changes in cell density is called quorum sensing. Catalyzes the transformation of S-ribosylhomocysteine (RHC) to homocysteine (HC) and 4,5-dihydroxy-2,3-pentadione (DPD). This Proteus mirabilis (strain HI4320) protein is S-ribosylhomocysteine lyase.